Reading from the N-terminus, the 269-residue chain is Small ribosomal subunit protein uS3 (269 aa).

In terms of domain architecture, KH type-2 spans 38–106 (IREWLHKNLE…QIQLNILEVK (69 aa)). Residues 215 to 269 (AQKAARQAAQGGRGGRGGNRRGRGDRPDRRGGRRRAEAAKQSAETPAPQTENAGA) are disordered. Residues 236-252 (GRGDRPDRRGGRRRAEA) are compositionally biased toward basic and acidic residues. Residues 256–269 (SAETPAPQTENAGA) show a composition bias toward polar residues.

It belongs to the universal ribosomal protein uS3 family. Part of the 30S ribosomal subunit. Forms a tight complex with proteins S10 and S14.

Its function is as follows. Binds the lower part of the 30S subunit head. Binds mRNA in the 70S ribosome, positioning it for translation. In Cutibacterium acnes (strain DSM 16379 / KPA171202) (Propionibacterium acnes), this protein is Small ribosomal subunit protein uS3.